The chain runs to 334 residues: MDNSAQKNERTGKHPRRASEVQKGFTAAYPTQSSIPFKSQASVIPESEKKGFNSQAKRFPHKKNDIPGPGFYNVIHQSPVSNSVSLSKKGTCMFPSMCARLDTIISKYPAANAYTIPSDFISKRDFSNSCSSMFQLPSFMKALKFETPAPNYYNASVSCCKQRNNVCTRAGFMSKTQRGSFAFADKGPPPGHYDINESLVKQSPNTLMSCFKSKTNRGLKLTSTGPGPGYYNPSDCTKVPKKTLFPKNPILNFSAQPSPLPPKPPFPGPGQYEIVDYLGPRKHFISSASFVSNTSRWTAAPPQPGLPGPATYKPELPGKQSFLYNEDKKWIPVL.

Residues 1 to 60 (MDNSAQKNERTGKHPRRASEVQKGFTAAYPTQSSIPFKSQASVIPESEKKGFNSQAKRFP) are disordered. Basic and acidic residues predominate over residues 7–20 (KNERTGKHPRRASE). The segment covering 29–42 (YPTQSSIPFKSQAS) has biased composition (polar residues). STPGR repeat units lie at residues 67-74 (PGPGFYNV), 109-117 (PAANAYTIP), 148-155 (PAPNYYNA), 187-206 (GPPPGHYDINESLVKQSPNT), 225-257 (GPGPGYYNPSDCTKVPKKTLFPKNPILNFSAQP), 267-282 (PGPGQYEIVDYLGPRK), and 306-316 (LPGPATYKPEL). Phosphotyrosine is present on Tyr-72.

Belongs to the STPG1 family.

It localises to the cytoplasm. The protein localises to the nucleus. Functionally, may positively contribute to the induction of apoptosis triggered by O(6)-methylguanine. This Homo sapiens (Human) protein is O(6)-methylguanine-induced apoptosis 2 (STPG1).